Reading from the N-terminus, the 264-residue chain is Orotidine 5'-phosphate decarboxylase (264 aa).

Residues Asp37, 59–61 (KTH), 91–100 (DRKFADIGNT), Tyr217, and Arg235 each bind substrate. Catalysis depends on Lys93, which acts as the Proton donor.

This sequence belongs to the OMP decarboxylase family.

The catalysed reaction is orotidine 5'-phosphate + H(+) = UMP + CO2. The protein operates within pyrimidine metabolism; UMP biosynthesis via de novo pathway; UMP from orotate: step 2/2. The protein is Orotidine 5'-phosphate decarboxylase (URA3) of Torulaspora delbrueckii (Yeast).